A 558-amino-acid polypeptide reads, in one-letter code: Urocanate hydratase (558 aa).

Residues 50 to 51, Q128, 174 to 176, E194, R199, 240 to 241, 261 to 265, 271 to 272, and Y320 each bind NAD(+); these read GG, GMG, NA, QTSAH, and YI. C408 is a catalytic residue. G490 serves as a coordination point for NAD(+).

This sequence belongs to the urocanase family. NAD(+) serves as cofactor.

The protein localises to the cytoplasm. It carries out the reaction 4-imidazolone-5-propanoate = trans-urocanate + H2O. It participates in amino-acid degradation; L-histidine degradation into L-glutamate; N-formimidoyl-L-glutamate from L-histidine: step 2/3. Its function is as follows. Catalyzes the conversion of urocanate to 4-imidazolone-5-propionate. The sequence is that of Urocanate hydratase from Deinococcus radiodurans (strain ATCC 13939 / DSM 20539 / JCM 16871 / CCUG 27074 / LMG 4051 / NBRC 15346 / NCIMB 9279 / VKM B-1422 / R1).